A 466-amino-acid chain; its full sequence is Ribulose bisphosphate carboxylase large chain (466 aa).

Lys5 carries the post-translational modification N6,N6,N6-trimethyllysine. Positions 114 and 164 each coordinate substrate. Lys166 (proton acceptor) is an active-site residue. Lys168 is a binding site for substrate. Lys192, Asp194, and Glu195 together coordinate Mg(2+). Lys192 is subject to N6-carboxylysine. The active-site Proton acceptor is the His285. Substrate contacts are provided by Arg286, His318, and Ser370.

The protein belongs to the RuBisCO large chain family. Type I subfamily. In terms of assembly, heterohexadecamer of 8 large chains and 8 small chains; disulfide-linked. The disulfide link is formed within the large subunit homodimers. It depends on Mg(2+) as a cofactor. Post-translationally, the disulfide bond which can form in the large chain dimeric partners within the hexadecamer appears to be associated with oxidative stress and protein turnover.

It localises to the plastid. The protein localises to the chloroplast. It catalyses the reaction 2 (2R)-3-phosphoglycerate + 2 H(+) = D-ribulose 1,5-bisphosphate + CO2 + H2O. It carries out the reaction D-ribulose 1,5-bisphosphate + O2 = 2-phosphoglycolate + (2R)-3-phosphoglycerate + 2 H(+). Functionally, ruBisCO catalyzes two reactions: the carboxylation of D-ribulose 1,5-bisphosphate, the primary event in carbon dioxide fixation, as well as the oxidative fragmentation of the pentose substrate in the photorespiration process. Both reactions occur simultaneously and in competition at the same active site. The protein is Ribulose bisphosphate carboxylase large chain of Isophysis tasmanica.